A 430-amino-acid polypeptide reads, in one-letter code: Histidine--tRNA ligase (430 aa).

This sequence belongs to the class-II aminoacyl-tRNA synthetase family. Homodimer.

It is found in the cytoplasm. It carries out the reaction tRNA(His) + L-histidine + ATP = L-histidyl-tRNA(His) + AMP + diphosphate + H(+). This is Histidine--tRNA ligase from Anaplasma marginale (strain St. Maries).